We begin with the raw amino-acid sequence, 513 residues long: Secreted LysM effector Vd6LysM (513 aa).

Residues 1–19 (MSFIKSLLLAAAAVASVSA) form the signal peptide. 4 LysM domains span residues 38-85 (SYWV…SYCV), 136-182 (KFHW…NVCV), 219-265 (KFHW…QVCV), and 302-348 (KFHW…QVCV). Positions 357 to 367 (TTTRPPTTTAP) are enriched in low complexity. Residues 357 to 377 (TTTRPPTTTAPGNGVSTPQPT) form a disordered region. LysM domains lie at 387–433 (KFHW…NVCV) and 465–511 (KFHW…NVCV).

It belongs to the secreted LysM effector family.

Its function is as follows. Might have a role in sequestration of chitin oligosaccharides (breakdown products of fungal cell walls that are released during invasion and act as triggers of host immunity) to dampen host defense. Does not play an important role during host colonization. The polypeptide is Secreted LysM effector Vd6LysM (Verticillium dahliae (strain VdLs.17 / ATCC MYA-4575 / FGSC 10137) (Verticillium wilt)).